Consider the following 249-residue polypeptide: MAGHSKWANIKHRKAAQDAKRGKIFSKLIRELTVASRQGGGEVADNPRLRAAIDKALANNMTKDTIQRAIERGAGNTDGDEMEETVYEGYGPEGVAVLVECMTDNRNRTVSDVRHAFSKNGGNLGTSGSVAFMFHKQGRLTLPEGVSEETAMEATLAAEPEDIVTQADGTLEVVTSPERFGAVKDALLEADIEPVASDVGLYPDNYTSIDDVETARKVLKLFDMLEDLDDVQNVYSNADFSDAVMAELE.

The protein belongs to the TACO1 family.

It is found in the cytoplasm. The protein is Probable transcriptional regulatory protein Csal_1845 of Chromohalobacter salexigens (strain ATCC BAA-138 / DSM 3043 / CIP 106854 / NCIMB 13768 / 1H11).